A 404-amino-acid chain; its full sequence is ORC1-type DNA replication protein 2 (404 aa).

Residues 64-68 (TGKTS), Tyr-205, and Arg-217 each bind ATP.

The protein belongs to the CDC6/cdc18 family. As to quaternary structure, interacts with MCM.

In terms of biological role, involved in regulation of DNA replication. Stimulates the helicase activity of MCM via stimulation of its ATPase activity. Binding to MCM may result in conformational changes in MCM, leading to catalytic ATP hydrolysis by the helicase. Directly stimulates MCM movement along single-stranded and double-stranded DNA. Does not bind DNA. The sequence is that of ORC1-type DNA replication protein 2 (cdc6-2) from Thermoplasma acidophilum (strain ATCC 25905 / DSM 1728 / JCM 9062 / NBRC 15155 / AMRC-C165).